Reading from the N-terminus, the 659-residue chain is Oligopeptide-binding protein AmiA (659 aa).

An N-terminal signal peptide occupies residues 1–22 (MKKNRVFATAGLVLLAAGVLAA). C23 carries the N-palmitoyl cysteine lipid modification. C23 carries S-diacylglycerol cysteine lipidation.

It belongs to the bacterial solute-binding protein 5 family.

The protein localises to the cell membrane. Functionally, part of the binding-protein-dependent transport system for oligopeptides; probably an oligopeptide binding protein. In Streptococcus pneumoniae serotype 4 (strain ATCC BAA-334 / TIGR4), this protein is Oligopeptide-binding protein AmiA (amiA).